A 6781-amino-acid chain; its full sequence is Replicase polyprotein 1ab (6781 aa).

The CoV Nsp1 globular domain maps to 2-109 (ASNHVTLAFA…ELELTFGRRG (108 aa)). Positions 59, 95, 99, and 102 each coordinate ssDNA. Residues 112 to 364 (IVPVDQYMCG…TKLKFDILSG (253 aa)) form the CoV Nsp2 N-terminal domain. Residues 383 to 776 (SALVDIVDDA…AEMYNTYLST (394 aa)) form the CoV Nsp2 middle domain. Positions 778–895 (VENLVLAGVS…VPICFKKKGG (118 aa)) constitute a CoV Nsp2 C-terminal domain. The 96-residue stretch at 896-991 (GDVKFSDEVS…VMVSQWPLND (96 aa)) folds into the Ubiquitin-like 1 domain. The segment at 1009–1040 (IDSEGDEVDSSAPEKVADVANSEPGDDGLPVA) is disordered. The region spanning 1057 to 1296 (SFIKDTPSTV…EPVVKPFYSY (240 aa)) is the Peptidase C16 1 domain. Cys1091 functions as the For PL1-PRO activity in the catalytic mechanism. A C4-type 1; degenerate zinc finger spans residues 1162-1193 (CGCGTGERIYEGCAFRMTPTLEPFPYGACAQC). Catalysis depends on for PL1-PRO activity residues His1239 and Asp1252. The Macro domain occupies 1297-1465 (KNVDFYQGDF…IFKEALVDTT (169 aa)). The 56-residue stretch at 1630–1685 (NKSVVIKVTEDTRSVKAVKVESTATYGQQIGPCLVNDTVVTDNKPVVADVVAKVVP) folds into the Ubiquitin-like 2 domain. A Peptidase C16 2 domain is found at 1691–1951 (SHYGFDKAGE…LLDTMNYASE (261 aa)). Cys1729 (for PL2-PRO activity) is an active-site residue. The segment at 1808-1838 (DGCCCSKRVVTAPVVNASVLKLGVEDGLCPH) adopts a C4-type 2; degenerate zinc-finger fold. Residues His1888 and Asp1901 each act as for PL2-PRO activity in the active site. 2 helical membrane-spanning segments follow: residues 1959-1979 (FMSR…GLCF) and 2022-2042 (WFKV…LLFM). An HD1 region spans residues 1959–2170 (FMSRNLITVF…FGDEIVVFFI (212 aa)). The 65-residue stretch at 2038 to 2102 (ALLFMTIRFT…TQVVWQHLRD (65 aa)) folds into the 3Ecto domain. Cystine bridges form between Cys2054–Cys2080 and Cys2072–Cys2077. Transmembrane regions (helical) follow at residues 2105 to 2125 (IGNV…GVYV), 2127 to 2147 (AITL…LGLQ), and 2150 to 2170 (IWFL…VFFI). The interval 2176–2266 (MFIKHVCLGC…VVKLNVQPTG (91 aa)) is Y1. The region spanning 2176 to 2516 (MFIKHVCLGC…PTVCIANKKG (341 aa)) is the CoV Nsp3 Y domain. His2180, Cys2185, Cys2190, Cys2193, Cys2226, His2229, Cys2233, and Cys2236 together coordinate Zn(2+). The ZF1 stretch occupies residues 2180–2193 (HVCLGCDKASCVAC). The segment at 2226-2236 (CKKHNFFCLNC) is ZF2. Residues 2267–2356 (PATILIDKVE…LVDSALLASL (90 aa)) form a Y2 region. Positions 2267–2516 (PATILIDKVE…PTVCIANKKG (250 aa)) are coV-Y. Residues 2357–2414 (SVDFGASLHSAFVSVLSNSFGKDLSSCNDMQDCKSTLGFDDVPLDTFNAAVAEAHRYD) are Y3. The segment at 2415-2516 (VLLTDMSFNN…PTVCIANKKG (102 aa)) is Y4. 7 helical membrane-spanning segments follow: residues 2528–2548 (FFWF…FLDF), 2619–2639 (IPAG…TIFG), 2654–2674 (GACI…TAVY), 2754–2774 (GSDF…ISVF), 2787–2807 (ILFN…FTKF), 2814–2834 (MSVG…SYIV), and 2863–2883 (LGFL…VYAF). The segment at 2528 to 2883 (FFWFLCLFIV…PWWVLMVYAF (356 aa)) is HD2. A Nsp4C domain is found at 2902–2997 (LFEGDKFVGS…PTVSYNSTLQ (96 aa)). Residues 2998 to 3299 (AGLRKMAQPS…VRQMYGVNLQ (302 aa)) form the Peptidase C30 domain. Catalysis depends on for 3CL-PRO activity residues His3038 and Cys3141. Transmembrane regions (helical) follow at residues 3336-3356 (GYVT…MFTL), 3361-3381 (LFFQ…NLAF), 3399-3419 (LMGF…VTIL), 3431-3451 (PASS…YFYA), 3454-3474 (ILSC…VGAV), 3476-3496 (YKVA…FGDI), and 3500-3520 (MFCY…LYWF). An HD3 region spans residues 3336–3520 (GYVTPMFACL…CCFYGILYWF (185 aa)). A RdRp Nsp7 cofactor domain is found at 3580-3662 (SKLTDIKCSN…SYFNDNSMLQ (83 aa)). Residues 3663-3857 (SVASTYVGLP…LGCERIVKLQ (195 aa)) enclose the RdRp Nsp8 cofactor domain. One can recognise a Nsp9 ssRNA-binding domain in the interval 3858-3965 (NNEIIPGKLK…GYIGATVRLQ (108 aa)). The 138-residue stretch at 3966-4103 (AGKQTEQAIN…CDRSIMQSTD (138 aa)) folds into the ExoN/MTase coactivator domain. Residues Cys4039, Cys4042, His4048, Cys4055, Cys4081, Cys4084, Cys4092, and Cys4094 each contribute to the Zn(2+) site. 2 zinc fingers span residues 4039-4055 (CLYC…DGFC) and 4081-4094 (CKVC…GCTC). One can recognise a NiRAN domain in the interval 4106–4355 (YLNRVRGSSA…ASECFVKSDI (250 aa)). The Nsp12 Interface domain maps to 4361 to 4459 (KSYDLLEYDF…WNNDLNLHSS (99 aa)). 5 residues coordinate Zn(2+): His4390, Cys4396, Cys4401, Cys4405, and Cys4582. Positions 4460 to 5027 (RLSINELLQF…NMYEKSAVLQ (568 aa)) constitute a Nsp12 RNA-dependent RNA polymerase domain. The segment at 4462-4676 (SINELLQFCS…HQKHLKSIVN (215 aa)) is rdRp Fingers N-ter. Residues 4677 to 4715 (TRGASVVIGTTKFYGGWDNMLKNLIDGVENPCLMGWDYP) form a rdRp Palm N-ter region. The 163-residue stretch at 4707–4869 (PCLMGWDYPK…CYNNDYASLG (163 aa)) folds into the RdRp catalytic domain. The interval 4716–4774 (KCDRALPNMIRMISAMILGSKHTTCCSSTDRFFRLCNELAQVLTEVVYSNGGFYLKPGG) is rdRp Fingers C-ter. Zn(2+) is bound by residues His4737, Cys4740, and Cys4741. A rdRp Palm C-ter region spans residues 4775–4910 (TTSGDATTAY…NKGPHEFCSQ (136 aa)). Active-site for RNA-directed RNA polymerase activity residues include Ser4854, Asp4855, and Asp4856. The tract at residues 4911–5027 (HTMQIVDKEG…NMYEKSAVLQ (117 aa)) is rdRp Thumb. A CV ZBD domain is found at 5028-5140 (SAGLCVVCGS…EDFNRIATSD (113 aa)). Residues Cys5032, Cys5035, Cys5043, Cys5046, Cys5053, Cys5056, His5060, His5066, Cys5077, Cys5082, Cys5099, and His5102 each contribute to the Zn(2+) site. In terms of domain architecture, (+)RNA virus helicase ATP-binding spans 5275–5466 (STIHKLHPAF…MCALKPDVFL (192 aa)). ATP is bound at residue 5310-5317 (GPPGSGKS). The (+)RNA virus helicase C-terminal domain occupies 5467–5636 (HKCYRCPAEI…EGCGLFKDCS (170 aa)). The 215-residue stretch at 5696–5910 (LFCTRDFAMR…RCLAIHDCFV (215 aa)) folds into the ExoN domain. Catalysis depends on for exoribonuclease activity residues Asp5714, Glu5716, and Glu5815. Zn(2+) is bound by residues Cys5831, Cys5833, Cys5849, His5852, His5880, Cys5884, and His5887. Residues His5891 and Asp5896 each act as for exoribonuclease activity in the active site. Residue Cys5902 participates in Zn(2+) binding. The 222-residue stretch at 5919 to 6140 (YPFIGNEAVI…NLWQTFSNNL (222 aa)) folds into the N7-MTase domain. Residue 5954-5960 (DIGNPKG) participates in S-adenosyl-L-methionine binding. Residues 6031 to 6045 (CNGGSLYVNNHAFHT) are gpppA-binding. 4 residues coordinate Zn(2+): Cys6069, Cys6086, Cys6097, and His6100. Residues 6142–6202 (GLENIAFNVL…NVAFELYAKR (61 aa)) form the Nsp15 N-terminal oligomerization domain. Residues 6203-6320 (KVGLTPPITI…IYTRKNGKFE (118 aa)) form the AV-Nsp11N/CoV-Nsp15M domain. Residues 6337 to 6477 (SPRSDMEKDF…KDHKLQTFYP (141 aa)) enclose the NendoU domain. Residues His6367, His6382, and Lys6423 each act as for uridylate-specific endoribonuclease activity in the active site. The region spanning 6481 to 6777 (ASEWKCGYSM…AICGFSNHLV (297 aa)) is the Nidovirus-type SAM-dependent 2'-O-MTase domain. Active-site for 2'-O-methyltransferase residues include Lys6525, Asp6609, Lys6649, and Glu6682.

Belongs to the coronaviruses polyprotein 1ab family. Interacts with PL-PRO and nsp6. In terms of assembly, monomer. Homodimer; disulfide-linked. As to quaternary structure, interacts with nsp8 and nsp12 to form the replication-transcription complex (RTC): nsp12, nsp7, two subunits of nsp8, and up to two subunits of nsp13. Eight copies of nsp7 and eight copies of nsp8 assemble to form a heterohexadecamer dsRNA-encircling ring structure. Interacts with nsp7, nsp13 and nsp12 to form the replication-transcription complex (RTC): nsp12, nsp7, two subunits of nsp8, and up to two subunits of nsp13. Eight copies of nsp7 and eight copies of nsp8 assemble to form a heterohexadecamer dsRNA-encircling ring structure. In terms of assembly, homodimer. As to quaternary structure, forms a dodecamer and interacts with nsp14 and nsp16; these interactions enhance nsp14 and nsp16 enzymatic activities. It depends on Mn(2+) as a cofactor. In terms of processing, specific enzymatic cleavages in vivo by its own proteases yield mature proteins. 3CL-PRO and PL-PRO proteinases are autocatalytically processed.

The protein localises to the host cytoplasm. Its subcellular location is the host nucleus. The protein resides in the host membrane. It localises to the host perinuclear region. It is found in the host endoplasmic reticulum. The protein localises to the host endoplasmic reticulum-Golgi intermediate compartment. The enzyme catalyses Thiol-dependent hydrolysis of ester, thioester, amide, peptide and isopeptide bonds formed by the C-terminal Gly of ubiquitin (a 76-residue protein attached to proteins as an intracellular targeting signal).. The catalysed reaction is a 5'-end diphospho-ribonucleoside in mRNA + GTP + H(+) = a 5'-end (5'-triphosphoguanosine)-ribonucleoside in mRNA + diphosphate. It carries out the reaction RNA(n) + a ribonucleoside 5'-triphosphate = RNA(n+1) + diphosphate. It catalyses the reaction ATP + H2O = ADP + phosphate + H(+). The enzyme catalyses a 5'-end (5'-triphosphoguanosine)-ribonucleoside in mRNA + S-adenosyl-L-methionine = a 5'-end (N(7)-methyl 5'-triphosphoguanosine)-ribonucleoside in mRNA + S-adenosyl-L-homocysteine. The catalysed reaction is uridylyl-uridylyl-ribonucleotide-RNA = a 3'-end uridylyl-2',3'-cyclophospho-uridine-RNA + a 5'-end dephospho-ribonucleoside-RNA. It carries out the reaction a 5'-end (N(7)-methyl 5'-triphosphoguanosine)-ribonucleoside in mRNA + S-adenosyl-L-methionine = a 5'-end (N(7)-methyl 5'-triphosphoguanosine)-(2'-O-methyl-ribonucleoside) in mRNA + S-adenosyl-L-homocysteine + H(+). With respect to regulation, inhibited by the substrate-analog Cbz-Val-Asn-Ser-Thr-Leu-Gln-CMK. Inhibited by (R)-16. In terms of biological role, multifunctional protein responsible for the transcription of negative stranded RNA, leader RNA, subgenomic mRNAs and progeny virion RNA as well as proteinases responsible for the cleavage of the polyprotein into functional products. Functionally, plays a role in the inhibition of host interferon and pro-inflammatory cytokines production. Suppresses host RELA/p65 activation by blocking NFKBIA phosphorylation. Targets also the RLR pathway downstream of the IRF3 activation by targeting host CREBBP to proteasomal degradation. Responsible for the cleavages located at the N-terminus of the replicase polyprotein. Participates together with nsp4 in the assembly of virally-induced cytoplasmic double-membrane vesicles necessary for viral replication. Forms a molecular pore spanning the double membrane of the coronavirus replication organelle. In addition, PLP2 possesses a deubiquitinating/deISGylating activity and processes both 'Lys-48'- and 'Lys-63'-linked polyubiquitin chains from cellular substrates. PLP2 also antagonizes innate immune induction of type I interferon by blocking the nuclear translocation of host IRF-3. Participates in the inhibition of the integrated stress response (ISR) in the infected host cell. Its function is as follows. Participates in the assembly of virally-induced cytoplasmic double-membrane vesicles necessary for viral replication. In terms of biological role, responsible for the majority of cleavages as it cleaves the C-terminus of replicase polyprotein at 11 sites. Recognizes substrates containing the core sequence [ILMVF]-Q-|-[SGACN]. Also contains an ADP-ribose-1''-phosphate (ADRP)-binding function. Participates in the inhibition of the integrated stress response (ISR) in the infected host cell. Functionally, plays a role in the initial induction of autophagosomes from host endoplasmic reticulum. Later, limits the expansion of these phagosomes that are no longer able to deliver viral components to lysosomes. Plays a role in viral RNA synthesis. Forms a hexadecamer with nsp8 (8 subunits of each) that may participate in viral replication by acting as a primase. Alternatively, may synthesize substantially longer products than oligonucleotide primers. Its function is as follows. Plays a role in viral RNA synthesis. Forms a hexadecamer with nsp7 (8 subunits of each) that may participate in viral replication by acting as a primase. Alternatively, may synthesize substantially longer products than oligonucleotide primers. In terms of biological role, forms a primer, NSP9-pU, which is utilized by the polymerase for the initiation of RNA chains. Interacts with ribosome signal recognition particle RNA (SRP). Together with NSP8, suppress protein integration into the cell membrane, thereby disrupting host immune defenses. Functionally, plays a pivotal role in viral transcription by stimulating both nsp14 3'-5' exoribonuclease and nsp16 2'-O-methyltransferase activities. Therefore plays an essential role in viral mRNAs cap methylation. RNA-directed RNA polymerase that catalyzes the transcription of viral genomic and subgenomic RNAs. Acts in complex with nsp7 and nsp8 to transcribe both the minus and positive strands of genomic RNA. The kinase-like NiRAN domain of NSP12 attaches one or more nucleotides to the amino terminus of NSP9, forming a covalent RNA-protein intermediate that serves as transcription/replication primer. Subgenomic RNAs (sgRNAs) are formed by discontinuous transcription: The polymerase has the ability to pause at transcription-regulating sequences (TRS) and jump to the leader TRS, resulting in a major deletion. This creates a series of subgenomic RNAs that are replicated, transcribed and translated. In addition, Nsp12 is a subunit of the viral RNA capping enzyme that catalyzes the RNA guanylyltransferase reaction for genomic and sub-genomic RNAs. Subsequently, the NiRAN domain transfers RNA to GDP, and forms the core cap structure GpppA-RNA. Its function is as follows. Plays a role in viral RNA synthesis. Multi-functional protein with a zinc-binding domain in N-terminus displaying RNA and DNA duplex-unwinding activities with 5' to 3' polarity. ATPase activity is strongly stimulated by poly(U), poly(dT), poly(C), poly(dA), but not by poly(G). In terms of biological role, plays a role in viral RNA synthesis through two distinct activities. The N7-guanine methyltransferase activity plays a role in the formation of the cap structure GpppA-RNA. The proofreading exoribonuclease reduces the sensitivity of the virus to RNA mutagens during replication. This activity acts on both ssRNA and dsRNA in a 3'-5' direction. Functionally, plays a role in viral transcription/replication and prevents the simultaneous activation of host cell dsRNA sensors, such as MDA5/IFIH1, OAS, and PKR. Acts by degrading the 5'-polyuridines generated during replication of the poly(A) region of viral genomic and subgenomic RNAs. Catalyzes a two-step reaction in which a 2'3'-cyclic phosphate (2'3'-cP) is first generated by 2'-O transesterification, which is then hydrolyzed to a 3'-phosphate (3'-P). If not degraded, poly(U) RNA would hybridize with poly(A) RNA tails and activate host dsRNA sensors. Decreases the RNA levels and thus the expression of host TBK1 and IRF3, antagonizing the host innate response. In Sus scrofa (Pig), this protein is Replicase polyprotein 1ab (rep).